Here is a 280-residue protein sequence, read N- to C-terminus: Protein YIP4b (280 aa).

Polar residues predominate over residues 1-15 (MSHNDTIPLYQSSQS). Residues 1–106 (MSHNDTIPLY…SGFGSPPNTL (106 aa)) form a disordered region. The Cytoplasmic segment spans residues 1 to 146 (MSHNDTIPLY…DPGKALRDWD (146 aa)). A helical transmembrane segment spans residues 147 to 167 (LWGPFFFIVFLGLTLSWSASV). The Lumenal portion of the chain corresponds to 168 to 171 (KKSE). 2 helical membrane passes run 172–192 (VFAV…LNVL) and 193–213 (LLGG…CLFP). The Lumenal portion of the chain corresponds to 214–230 (LDVGAVICMLKDNVILK). A helical membrane pass occupies residues 231–251 (MVVVSVTLAWSSWAAYPFMSA). Topologically, residues 252 to 258 (AVNPRRK) are cytoplasmic. Residues 259 to 279 (ALALYPVFLMYVSVGFLIIAI) form a helical membrane-spanning segment. A topological domain (lumenal) is located at residue asparagine 280.

This sequence belongs to the YIP1 family. In terms of assembly, homodimer and heterodimer with YIP4A. Component of a trans-Golgi network (TGN)-localized ECH/YIP4 complex made of ECH, YIP4A and YIP4B. Interacts directly with ECH. Expressed in developing root hair cells.

The protein localises to the golgi apparatus. Its subcellular location is the trans-Golgi network membrane. Together with YIP4A, involved in the regulation of cell elongation during root and hypocotyl growth. YIP4A and YIP4B are central trafficking components in Rho-of-plant (ROPs, e.g. ARAC4/ROP2, ARAC5/ROP4 and ARAC3/ROP6) small GTPases-dependent root hair formation, thus contributing to activation and plasma membrane accumulation of ROPs during hair initiation. The ECH/YIP4 complex is involved in the modulation of the trans-Golgi network (TGN)-mediated trafficking of some proteins and cell wall components (e.g. pectin and hemicellulose) to the cell wall in dark-grown hypocotyls and in secretory cells of the seed coat. The protein is Protein YIP4b of Arabidopsis thaliana (Mouse-ear cress).